The chain runs to 148 residues: Single-stranded DNA-binding protein 1-B, mitochondrial (148 aa).

The N-terminal 17 residues, Met1 to Gln17, are a transit peptide targeting the mitochondrion. The region spanning Met30–Thr142 is the SSB domain.

Homotetramer.

It is found in the mitochondrion. The protein localises to the mitochondrion matrix. The protein resides in the mitochondrion nucleoid. In terms of biological role, binds preferentially and cooperatively to pyrimidine rich single-stranded DNA (ss-DNA). Required to maintain the copy number of mitochondrial DNA (mtDNA) and plays crucial roles during mtDNA replication that stimulate activity of the DNA polymerase at the replication fork. May also function in mtDNA repair. This chain is Single-stranded DNA-binding protein 1-B, mitochondrial (ssbp1-b), found in Xenopus laevis (African clawed frog).